The sequence spans 634 residues: UPF0313 protein PG_0934 (634 aa).

One can recognise a Radical SAM core domain in the interval 302–582 (AYEMIKHSVN…RQHMFFFWYK (281 aa)). Cys316, Cys320, and Cys323 together coordinate [4Fe-4S] cluster. The disordered stretch occupies residues 607–634 (DRTTSSRNDRHTPPSTQPRKSKSKSRHS). Positions 625-634 (RKSKSKSRHS) are enriched in basic residues.

The protein belongs to the UPF0313 family. It depends on [4Fe-4S] cluster as a cofactor.

The sequence is that of UPF0313 protein PG_0934 from Porphyromonas gingivalis (strain ATCC BAA-308 / W83).